A 203-amino-acid polypeptide reads, in one-letter code: ATP-dependent Clp protease proteolytic subunit 1 (203 aa).

The active-site Nucleophile is the S98. The active site involves H123.

The protein belongs to the peptidase S14 family. As to quaternary structure, fourteen ClpP subunits assemble into 2 heptameric rings which stack back to back to give a disk-like structure with a central cavity, resembling the structure of eukaryotic proteasomes.

Its subcellular location is the cytoplasm. It carries out the reaction Hydrolysis of proteins to small peptides in the presence of ATP and magnesium. alpha-casein is the usual test substrate. In the absence of ATP, only oligopeptides shorter than five residues are hydrolyzed (such as succinyl-Leu-Tyr-|-NHMec, and Leu-Tyr-Leu-|-Tyr-Trp, in which cleavage of the -Tyr-|-Leu- and -Tyr-|-Trp bonds also occurs).. Functionally, cleaves peptides in various proteins in a process that requires ATP hydrolysis. Has a chymotrypsin-like activity. Plays a major role in the degradation of misfolded proteins. In Chlamydia felis (strain Fe/C-56) (Chlamydophila felis), this protein is ATP-dependent Clp protease proteolytic subunit 1.